The sequence spans 103 residues: Large ribosomal subunit protein uL24 (103 aa).

It belongs to the universal ribosomal protein uL24 family. As to quaternary structure, part of the 50S ribosomal subunit.

Functionally, one of two assembly initiator proteins, it binds directly to the 5'-end of the 23S rRNA, where it nucleates assembly of the 50S subunit. Its function is as follows. One of the proteins that surrounds the polypeptide exit tunnel on the outside of the subunit. In Bacillus spizizenii (strain ATCC 23059 / NRRL B-14472 / W23) (Bacillus subtilis subsp. spizizenii), this protein is Large ribosomal subunit protein uL24 (rplX).